Reading from the N-terminus, the 375-residue chain is Killer cell immunoglobulin-like receptor 2DL5B (375 aa).

The signal sequence occupies residues M1 to T21. Over H22–H238 the chain is Extracellular. 2 Ig-like C2-type domains span residues G42–S102 and G137–S200. 2 disulfides stabilise this stretch: C49-C95 and C144-C193. Residues V213–T233 are disordered. Residue N218 is glycosylated (N-linked (GlcNAc...) asparagine). Residues S219–S231 show a composition bias toward low complexity. Residues L239–L259 form a helical membrane-spanning segment. Over L260 to I375 the chain is Cytoplasmic. Residues A334–I375 are disordered. Residues R355–A366 are compositionally biased toward polar residues.

The protein belongs to the immunoglobulin superfamily.

It localises to the cell membrane. Its function is as follows. Receptor on natural killer (NK) cells for HLA-C alleles. Inhibits the activity of NK cells thus preventing cell lysis. This chain is Killer cell immunoglobulin-like receptor 2DL5B (KIR2DL5B), found in Homo sapiens (Human).